We begin with the raw amino-acid sequence, 228 residues long: uncharacterized protein (228 aa).

Residues 194-228 form a disordered region; it reads SRRADEHPAPSTEPHAAAVAPEPDFMAEPIPALEE.

This is an uncharacterized protein from Treponema pallidum (strain Nichols).